Consider the following 187-residue polypeptide: Protein TfaD (187 aa).

In the C-terminal section; belongs to the tfa family.

This is Protein TfaD (tfaD) from Escherichia coli (strain K12).